Here is a 391-residue protein sequence, read N- to C-terminus: Histamine H4 receptor (391 aa).

The Extracellular portion of the chain corresponds to 1-19; sequence MSESNSTGILPPAAQVPLA. Asn5 is a glycosylation site (N-linked (GlcNAc...) asparagine). The chain crosses the membrane as a helical span at residues 20–40; the sequence is FLMSSFAFAIMVGNAVVILAF. Residues 41-52 lie on the Cytoplasmic side of the membrane; it reads VVDRNLRHRSNY. A helical transmembrane segment spans residues 53 to 73; it reads FFLNLAISDFLVGLISIPLYI. At 74–87 the chain is on the extracellular side; the sequence is PHVLFNWNFGSGIC. The cysteines at positions 87 and 166 are disulfide-linked. A helical membrane pass occupies residues 88–108; sequence MFWLITDYLLCTASVYNIVLI. Residues 109 to 131 are Cytoplasmic-facing; sequence SYDRYQSVSNAVSYRAQHTGIMK. A helical transmembrane segment spans residues 132–152; the sequence is IVAQMVAVWILAFLVNGPMIL. The Extracellular segment spans residues 153 to 174; the sequence is ASDSWKNSTNTKDCEPGFVTEW. The N-linked (GlcNAc...) asparagine glycan is linked to Asn159. A helical membrane pass occupies residues 175–195; sequence YILTITMLLEFLLPVISVAYF. The Cytoplasmic segment spans residues 196-306; that stretch reads NVQIYWSLWK…LLRGRKLARS (111 aa). The interval 238-258 is disordered; it reads TSNPGLKESAASRHSESPRRK. Over residues 247–256 the composition is skewed to basic and acidic residues; it reads AASRHSESPR. The helical transmembrane segment at 307–327 threads the bilayer; it reads LAILLSAFAICWAPYCLFTIV. Over 328-343 the chain is Extracellular; the sequence is LSTYPRTERPKSVWYS. A helical transmembrane segment spans residues 344–364; it reads IAFWLQWFNSFVNPFLYPLCH. Over 365–391 the chain is Cytoplasmic; sequence RRFQKAFWKILCVTKQPALSQNQSVSS.

This sequence belongs to the G-protein coupled receptor 1 family. As to quaternary structure, interacts with TSPAN4.

The protein resides in the cell membrane. Its function is as follows. The H4 subclass of histamine receptors could mediate the histamine signals in peripheral tissues. Displays a significant level of constitutive activity (spontaneous activity in the absence of agonist). This chain is Histamine H4 receptor (Hrh4), found in Mus musculus (Mouse).